The sequence spans 280 residues: uncharacterized protein (280 aa).

It belongs to the herpesviridae BDLF2 family.

This is an uncharacterized protein from Saimiri sciureus (Common squirrel monkey).